A 253-amino-acid polypeptide reads, in one-letter code: Cyclin-C1-1 (253 aa).

It belongs to the cyclin family. Cyclin C subfamily.

The sequence is that of Cyclin-C1-1 (CYCC1-1) from Arabidopsis thaliana (Mouse-ear cress).